The primary structure comprises 165 residues: UPF0303 protein Bamb_1459 (165 aa).

This sequence belongs to the UPF0303 family.

The protein is UPF0303 protein Bamb_1459 of Burkholderia ambifaria (strain ATCC BAA-244 / DSM 16087 / CCUG 44356 / LMG 19182 / AMMD) (Burkholderia cepacia (strain AMMD)).